Reading from the N-terminus, the 468-residue chain is Bifunctional protein GlmU (468 aa).

Residues 1–233 (MAQAGSASPL…LEEANLVNDR (233 aa)) form a pyrophosphorylase region. Residues 15-18 (LAAG), Lys29, Gln79, and 84-85 (GT) each bind UDP-N-acetyl-alpha-D-glucosamine. Residue Asp109 coordinates Mg(2+). Residues Gly146, Glu159, Asn174, and Asn231 each coordinate UDP-N-acetyl-alpha-D-glucosamine. Residue Asn231 participates in Mg(2+) binding. A linker region spans residues 234–254 (SQLARAEEILRRRILDAHMKE). The interval 255–468 (GVTVRDPVST…GDRRRARTEG (214 aa)) is N-acetyltransferase. Arg336 and Lys354 together coordinate UDP-N-acetyl-alpha-D-glucosamine. His366 serves as the catalytic Proton acceptor. The UDP-N-acetyl-alpha-D-glucosamine site is built by Tyr369 and Asn380. Acetyl-CoA contacts are provided by residues Ala383, 389 to 390 (NY), and Ala426.

It in the N-terminal section; belongs to the N-acetylglucosamine-1-phosphate uridyltransferase family. In the C-terminal section; belongs to the transferase hexapeptide repeat family. In terms of assembly, homotrimer. Mg(2+) is required as a cofactor.

The protein localises to the cytoplasm. It catalyses the reaction alpha-D-glucosamine 1-phosphate + acetyl-CoA = N-acetyl-alpha-D-glucosamine 1-phosphate + CoA + H(+). The enzyme catalyses N-acetyl-alpha-D-glucosamine 1-phosphate + UTP + H(+) = UDP-N-acetyl-alpha-D-glucosamine + diphosphate. It participates in nucleotide-sugar biosynthesis; UDP-N-acetyl-alpha-D-glucosamine biosynthesis; N-acetyl-alpha-D-glucosamine 1-phosphate from alpha-D-glucosamine 6-phosphate (route II): step 2/2. It functions in the pathway nucleotide-sugar biosynthesis; UDP-N-acetyl-alpha-D-glucosamine biosynthesis; UDP-N-acetyl-alpha-D-glucosamine from N-acetyl-alpha-D-glucosamine 1-phosphate: step 1/1. The protein operates within bacterial outer membrane biogenesis; LPS lipid A biosynthesis. In terms of biological role, catalyzes the last two sequential reactions in the de novo biosynthetic pathway for UDP-N-acetylglucosamine (UDP-GlcNAc). The C-terminal domain catalyzes the transfer of acetyl group from acetyl coenzyme A to glucosamine-1-phosphate (GlcN-1-P) to produce N-acetylglucosamine-1-phosphate (GlcNAc-1-P), which is converted into UDP-GlcNAc by the transfer of uridine 5-monophosphate (from uridine 5-triphosphate), a reaction catalyzed by the N-terminal domain. The protein is Bifunctional protein GlmU of Rubrobacter xylanophilus (strain DSM 9941 / JCM 11954 / NBRC 16129 / PRD-1).